A 463-amino-acid polypeptide reads, in one-letter code: tRNA (guanine(10)-N(2))-methyltransferase TRMT11 (463 aa).

Residue Ala2 is modified to N-acetylalanine.

It belongs to the class I-like SAM-binding methyltransferase superfamily. TRM11 methyltransferase family. As to quaternary structure, part of the heterodimeric TRMT11-TRM112 methyltransferase complex; this complex forms an active tRNA methyltransferase, where TRMT112 acts as an activator of the catalytic subunit TRMT11.

The protein resides in the cytoplasm. The catalysed reaction is guanosine(10) in tRNA + S-adenosyl-L-methionine = N(2)-methylguanosine(10) in tRNA + S-adenosyl-L-homocysteine + H(+). In terms of biological role, catalytic subunit of the TRMT11-TRM112 methyltransferase complex, that specifically mediates the S-adenosyl-L-methionine-dependent N(2)-methylation of guanosine nucleotide at position 10 (m2G10) in tRNAs. This is one of the major tRNA (guanine-N(2))-methyltransferases. This chain is tRNA (guanine(10)-N(2))-methyltransferase TRMT11, found in Pongo abelii (Sumatran orangutan).